We begin with the raw amino-acid sequence, 179 residues long: MLNVSGLFVLLCGLLVSSSAQEVLAGVSSQLLNDLTQGLLRADFLPSLQTTGLQKPLSSAFDGVSGLLDIFGPPLTNEINTVSIQVKNPQLLHVSIESTPQRKEATVQVPFTSELIVQLLTMKPFTANMQSDIKVQIRLEKNVGGRYELAFGNCRLLPEAIWIQTGVQLAPAQNLLWQT.

The signal sequence occupies residues 1-20 (MLNVSGLFVLLCGLLVSSSA).

Belongs to the BPI/LBP/Plunc superfamily. Plunc family. In terms of tissue distribution, expressed in breast cancer and salivary gland.

The protein localises to the secreted. Its function is as follows. Major protein in sweat, has surfactant properties. The protein is Putative BPIFA4P protein (BPIFA4P) of Homo sapiens (Human).